The chain runs to 338 residues: Lipoate-protein ligase A (338 aa).

The BPL/LPL catalytic domain maps to 29–216; the sequence is PATQRVLFLW…AFFAHYGERV (188 aa). ATP-binding positions include arginine 71, 76-79, and lysine 134; that span reads GAVF. A (R)-lipoate-binding site is contributed by lysine 134.

Belongs to the LplA family. Monomer.

Its subcellular location is the cytoplasm. The catalysed reaction is L-lysyl-[lipoyl-carrier protein] + (R)-lipoate + ATP = N(6)-[(R)-lipoyl]-L-lysyl-[lipoyl-carrier protein] + AMP + diphosphate + H(+). The protein operates within protein modification; protein lipoylation via exogenous pathway; protein N(6)-(lipoyl)lysine from lipoate: step 1/2. It functions in the pathway protein modification; protein lipoylation via exogenous pathway; protein N(6)-(lipoyl)lysine from lipoate: step 2/2. Catalyzes both the ATP-dependent activation of exogenously supplied lipoate to lipoyl-AMP and the transfer of the activated lipoyl onto the lipoyl domains of lipoate-dependent enzymes. In Escherichia coli (strain 55989 / EAEC), this protein is Lipoate-protein ligase A.